The sequence spans 279 residues: MDMRTKLMAVVAGAAMAFGGTAAAQGTPAPGKVAATKAPAAATRGKTEVTWWGHAAFVIRSPGGAVIAIDPWLSNPKAPKGAAQPEALDAILLTHGHFDHVGEAKALAEKTGAKVYGSFELINLLGLPEAQSVGANAGGTFQVKDVTFHLVEAVHSSSYAADPKSPAQYAGAPVGYVLEIDKGPTLYHAGDTGPFEGMSLIATQFKPSVALLPIGGHFTMGPAEAAQAVRLLKVKSVIPMHYGTFPLLQGTPDALTGELKKLRNTAKVVVPEPGATTAL.

It belongs to the UPF0173 family.

In Myxococcus xanthus (strain DK1622), this protein is UPF0173 metal-dependent hydrolase MXAN_1394.